Here is a 555-residue protein sequence, read N- to C-terminus: Coiled-coil domain-containing protein 102A (555 aa).

3 disordered regions span residues 1–68 (MSHG…ADGD), 136–202 (LAGA…GSQE), and 214–254 (PEEP…EEDA). Residues S12, S26, and S28 each carry the phosphoserine modification. A compositionally biased stretch (pro residues) spans 37-61 (SLPPTPPSGTPSPGPPPALPLPPTP). Residues 72 to 161 (REELRLRELE…ARGRELARLR (90 aa)) are a coiled coil. Basic and acidic residues-rich tracts occupy residues 136–159 (LAGA…ELAR) and 166–183 (GVDR…REQE). Over residues 224 to 236 (RSAGAGAPRGSSG) the composition is skewed to low complexity. Coiled-coil stretches lie at residues 268–401 (QKVL…RRQT) and 432–522 (KLKK…QNAP). The interval 478 to 555 (ELDEAHNQAR…EDEDLQIQVA (78 aa)) is disordered. Residues 536–555 (EAGDGASDLDEDEDLQIQVA) show a composition bias toward acidic residues. S542 is subject to Phosphoserine.

This Bos taurus (Bovine) protein is Coiled-coil domain-containing protein 102A (CCDC102A).